The primary structure comprises 630 residues: Chaperone protein HtpG (630 aa).

An a; substrate-binding region spans residues 1–341 (MTQNATSETL…SADLPLNVSR (341 aa)). Residues 342 to 558 (EILQESRDVR…QNDLSPHLLR (217 aa)) form a b region. Positions 559–630 (MLKAAGQEVP…KRLNALLLKV (72 aa)) are c.

Belongs to the heat shock protein 90 family. In terms of assembly, homodimer.

The protein localises to the cytoplasm. Its function is as follows. Molecular chaperone. Has ATPase activity. This chain is Chaperone protein HtpG, found in Bordetella avium (strain 197N).